Consider the following 3102-residue polypeptide: Laminin subunit alpha lam-3 (3102 aa).

The first 16 residues, 1-16 (MRLWLGLLAVSNIALG), serve as a signal peptide directing secretion. Residues Asn19, Asn135, and Asn237 are each glycosylated (N-linked (GlcNAc...) asparagine). One can recognise a Laminin N-terminal domain in the interval 44–295 (SERGLFPNIF…SISDISIGGQ (252 aa)). Disulfide bonds link Cys296–Cys305, Cys298–Cys316, Cys318–Cys327, Cys330–Cys350, Cys353–Cys362, Cys355–Cys387, Cys390–Cys399, Cys402–Cys420, Cys423–Cys435, Cys425–Cys451, Cys453–Cys462, Cys465–Cys475, Cys478–Cys491, Cys480–Cys496, Cys498–Cys507, and Cys510–Cys525. Laminin EGF-like domains follow at residues 296-352 (CICY…VCQQ), 353-422 (CQCF…ACRT), 423-477 (CECD…TCEP), and 478-527 (CPCN…GCQP). Residues 548–740 (INNIGWHLTD…QDTLMGGVEV (193 aa)) enclose the Laminin IV type A 1 domain. 31 disulfides stabilise this stretch: Cys774–Cys783, Cys776–Cys790, Cys793–Cys802, Cys805–Cys822, Cys825–Cys838, Cys827–Cys858, Cys861–Cys870, Cys873–Cys886, Cys889–Cys903, Cys891–Cys910, Cys913–Cys922, Cys925–Cys938, Cys941–Cys953, Cys943–Cys960, Cys962–Cys971, Cys974–Cys985, Cys988–Cys1000, Cys990–Cys1007, Cys1009–Cys1018, Cys1021–Cys1033, Cys1036–Cys1049, Cys1038–Cys1056, Cys1058–Cys1067, Cys1070–Cys1083, Cys1086–Cys1098, Cys1088–Cys1105, Cys1107–Cys1116, Cys1119–Cys1131, Cys1134–Cys1144, Cys1137–Cys1151, and Cys1153–Cys1162. 10 Laminin EGF-like domains span residues 774-824 (CDCH…ACEQ), 825-888 (CECP…KCIE), 889-940 (CTCN…TCKP), 941-987 (CGCH…GCPA), 988-1035 (CDCN…GCQF), 1036-1085 (CHCN…GCED), 1086-1133 (CGCD…GCTE), 1134-1180 (CEPC…GCKL), 1181-1226 (CDCS…TCEP), and 1227-1283 (CGCN…GCTE). N-linked (GlcNAc...) asparagine glycosylation occurs at Asn796. N-linked (GlcNAc...) asparagine glycosylation occurs at Asn991. N-linked (GlcNAc...) asparagine glycosylation is present at Asn1027. N-linked (GlcNAc...) asparagine glycosylation is present at Asn1076. N-linked (GlcNAc...) asparagine glycosylation occurs at Asn1164. Intrachain disulfides connect Cys1165/Cys1178, Cys1181/Cys1193, Cys1183/Cys1200, Cys1202/Cys1211, Cys1214/Cys1224, Cys1227/Cys1246, Cys1229/Cys1252, Cys1254/Cys1263, and Cys1266/Cys1281. The N-linked (GlcNAc...) asparagine glycan is linked to Asn1288. A Laminin IV type A 2 domain is found at 1295–1496 (QSDLVWQQMY…STTKAIGVEK (202 aa)). Cystine bridges form between Cys1540–Cys1549, Cys1542–Cys1556, Cys1559–Cys1568, Cys1571–Cys1587, Cys1590–Cys1603, Cys1592–Cys1614, Cys1617–Cys1626, Cys1629–Cys1644, Cys1647–Cys1659, Cys1649–Cys1666, Cys1668–Cys1677, and Cys1680–Cys1691. 3 Laminin EGF-like domains span residues 1540–1589 (CSCH…ACTK), 1590–1646 (CACP…TCSP), and 1647–1693 (CDCH…VCTS). N-linked (GlcNAc...) asparagine glycosylation is found at Asn1717, Asn1734, Asn1777, Asn1806, Asn1839, Asn1875, Asn1969, Asn1984, and Asn2048. Residues 2061 to 2084 (EAVSKMLGSEGSESGDANEESLRS) form a disordered region. Residues Asn2091, Asn2193, Asn2369, and Asn2479 are each glycosylated (N-linked (GlcNAc...) asparagine). 3 Laminin G-like domains span residues 2467-2644 (SQRG…TDGC), 2652-2839 (DKII…IGMC), and 2913-3088 (RYGL…AKAC). Cys2617 and Cys2644 are oxidised to a cystine. Asn2672 and Asn2686 each carry an N-linked (GlcNAc...) asparagine glycan. A disulfide bond links Cys2814 and Cys2839. N-linked (GlcNAc...) asparagine glycans are attached at residues Asn2932, Asn2959, and Asn3007. Cys3058 and Cys3088 are disulfide-bonded.

In terms of assembly, laminin is a complex glycoprotein, consisting of three different polypeptide chains (alpha, beta, gamma), which are bound to each other by disulfide bonds into a cross-shaped molecule comprising one long and three short arms with globules at each end.

It is found in the secreted. Its subcellular location is the extracellular space. The protein resides in the extracellular matrix. It localises to the basement membrane. Its function is as follows. Binding to cells via a high affinity receptor, laminin is thought to mediate the attachment, migration and organization of cells into tissues during embryonic development by interacting with other extracellular matrix components. Required to assemble a stable basement membrane and for organizing receptor complexes and cytoskeletal components to the proper cell surfaces. During embryogenesis, does not require the presence of collagen type IV in order to associate with cell surfaces, prior to assembly of the prototypical basement membrane. Plays an important role in muscle contraction of the body. Probably plays a distinct role from the related laminin subunit alpha epi-1. The protein is Laminin subunit alpha lam-3 of Caenorhabditis elegans.